The following is a 94-amino-acid chain: Co-chaperonin GroES (94 aa).

The protein belongs to the GroES chaperonin family. In terms of assembly, heptamer of 7 subunits arranged in a ring. Interacts with the chaperonin GroEL.

The protein localises to the cytoplasm. Together with the chaperonin GroEL, plays an essential role in assisting protein folding. The GroEL-GroES system forms a nano-cage that allows encapsulation of the non-native substrate proteins and provides a physical environment optimized to promote and accelerate protein folding. GroES binds to the apical surface of the GroEL ring, thereby capping the opening of the GroEL channel. This Lactobacillus delbrueckii subsp. bulgaricus (strain ATCC BAA-365 / Lb-18) protein is Co-chaperonin GroES.